The primary structure comprises 146 residues: 3-dehydroquinate dehydratase (146 aa).

Tyrosine 23 (proton acceptor) is an active-site residue. Residues asparagine 75, histidine 81, and aspartate 88 each coordinate substrate. Histidine 101 (proton donor) is an active-site residue. Substrate-binding positions include 102 to 103 (LS) and arginine 112.

This sequence belongs to the type-II 3-dehydroquinase family. As to quaternary structure, homododecamer.

It catalyses the reaction 3-dehydroquinate = 3-dehydroshikimate + H2O. It functions in the pathway metabolic intermediate biosynthesis; chorismate biosynthesis; chorismate from D-erythrose 4-phosphate and phosphoenolpyruvate: step 3/7. In terms of biological role, catalyzes a trans-dehydration via an enolate intermediate. The chain is 3-dehydroquinate dehydratase from Marinobacter nauticus (strain ATCC 700491 / DSM 11845 / VT8) (Marinobacter aquaeolei).